The primary structure comprises 686 residues: MKELFLEIGTEEIPAGFIPKAMADMEALLAKELENARISFDDIRTLGTPRRLALTVKGLPTVQPDAEITAMGPARNVAFDAEGKPTRAAEGFARGQGVDVASLTLVATEKGEYVAAVRKESGRPVPELLAEILPRLVANIPFRKSMRWGALDVRFARPIHWIVALFDGVVVPFTFGNIESGTISRGHRFMANQPFPVRDFAHYLEECERHFVIPDPERRQEIIRREIHRVAKAAGGHLLPDEGLLEEVSFLCEYPSAVHGTFSAEFLKVPREVLITSMRSHQRYFSIVDDAGKLMPGFITINNTLTEDPTVVVKGNERVLRARLSDARFFFEEDQKVKLETRVESLKNVVYQQKLGTSFEKMERFRALAEGLADLLNPAVKVKVSQAAFLCKADLVSGMVGEFPEVQGIMGREYALIEGEDAEVAAAIAEHYLPTQAGGELPASDIGAFVSMADKLDTICGCFGVGLIPTGSADPYALRRSALGIINIILDKGYRLSLEEQVDKALGLLAAKLTRPAVDVKADVLEFFRGRFVNLMADRHASDAVDAAVAAGCADLVDAAARIAALSEFRSHPDFEPLAVAFKRVGNIVKEGVDAPVDTALFQDAAEGLLNDAVQGVAVSVREKIATGAYLEALTEIAALRGPVDTFFDKVMVMAEDERVRTNRLALLTGIARMLGAIADFAKIAA.

This sequence belongs to the class-II aminoacyl-tRNA synthetase family. As to quaternary structure, tetramer of two alpha and two beta subunits.

The protein localises to the cytoplasm. The enzyme catalyses tRNA(Gly) + glycine + ATP = glycyl-tRNA(Gly) + AMP + diphosphate. This chain is Glycine--tRNA ligase beta subunit, found in Geobacter metallireducens (strain ATCC 53774 / DSM 7210 / GS-15).